A 164-amino-acid polypeptide reads, in one-letter code: ATP synthase subunit b 2 (164 aa).

Residues 4 to 24 (TFWAFVGLVLFLALLAYFKVP) form a helical membrane-spanning segment.

This sequence belongs to the ATPase B chain family. In terms of assembly, F-type ATPases have 2 components, F(1) - the catalytic core - and F(0) - the membrane proton channel. F(1) has five subunits: alpha(3), beta(3), gamma(1), delta(1), epsilon(1). F(0) has three main subunits: a(1), b(2) and c(10-14). The alpha and beta chains form an alternating ring which encloses part of the gamma chain. F(1) is attached to F(0) by a central stalk formed by the gamma and epsilon chains, while a peripheral stalk is formed by the delta and b chains.

It localises to the cell inner membrane. Functionally, f(1)F(0) ATP synthase produces ATP from ADP in the presence of a proton or sodium gradient. F-type ATPases consist of two structural domains, F(1) containing the extramembraneous catalytic core and F(0) containing the membrane proton channel, linked together by a central stalk and a peripheral stalk. During catalysis, ATP synthesis in the catalytic domain of F(1) is coupled via a rotary mechanism of the central stalk subunits to proton translocation. Component of the F(0) channel, it forms part of the peripheral stalk, linking F(1) to F(0). The chain is ATP synthase subunit b 2 from Bartonella quintana (strain Toulouse) (Rochalimaea quintana).